A 119-amino-acid polypeptide reads, in one-letter code: DNA-directed RNA polymerase subunit omega (119 aa).

The protein belongs to the RNA polymerase subunit omega family. The RNAP catalytic core consists of 2 alpha, 1 beta, 1 beta' and 1 omega subunit. When a sigma factor is associated with the core the holoenzyme is formed, which can initiate transcription.

The catalysed reaction is RNA(n) + a ribonucleoside 5'-triphosphate = RNA(n+1) + diphosphate. Its function is as follows. Promotes RNA polymerase assembly. Latches the N- and C-terminal regions of the beta' subunit thereby facilitating its interaction with the beta and alpha subunits. The protein is DNA-directed RNA polymerase subunit omega of Caulobacter sp. (strain K31).